Here is a 66-residue protein sequence, read N- to C-terminus: DNA gyrase inhibitor YacG (66 aa).

Positions 10, 13, 29, and 33 each coordinate Zn(2+). A disordered region spans residues 46-66 (KRIPSDVQITDSDEWSDETRY). Positions 56–66 (DSDEWSDETRY) are enriched in acidic residues.

The protein belongs to the DNA gyrase inhibitor YacG family. Interacts with GyrB. Requires Zn(2+) as cofactor.

In terms of biological role, inhibits all the catalytic activities of DNA gyrase by preventing its interaction with DNA. Acts by binding directly to the C-terminal domain of GyrB, which probably disrupts DNA binding by the gyrase. The chain is DNA gyrase inhibitor YacG from Sodalis glossinidius (strain morsitans).